A 90-amino-acid chain; its full sequence is MMKTAVMFILVVVISLTYSSEEQEVARTYCGRHLANILAYVCFGVEKRGGAQYAPYWQETYLRSRKEPGVVDECCFRPCKLEVLKSYCGV.

The signal sequence occupies residues 1-20 (MMKTAVMFILVVVISLTYSS). 3 disulfide bridges follow: Cys-30–Cys-75, Cys-42–Cys-88, and Cys-74–Cys-79. A propeptide spans 49–64 (GGAQYAPYWQETYLRS) (c peptide like).

It belongs to the insulin family. Heterodimer of a B chain and an A chain linked by two disulfide bonds.

The protein resides in the secreted. Brain peptide responsible for activation of prothoracic glands to produce ecdysone in insects. This Bombyx mori (Silk moth) protein is Bombyxin B-9 (BBXB9).